The following is a 208-amino-acid chain: ATP-dependent Clp protease proteolytic subunit (208 aa).

The active-site Nucleophile is the S101. H126 is an active-site residue.

It belongs to the peptidase S14 family. In terms of assembly, component of the chloroplastic Clp protease core complex.

It localises to the plastid. The protein localises to the chloroplast stroma. It carries out the reaction Hydrolysis of proteins to small peptides in the presence of ATP and magnesium. alpha-casein is the usual test substrate. In the absence of ATP, only oligopeptides shorter than five residues are hydrolyzed (such as succinyl-Leu-Tyr-|-NHMec, and Leu-Tyr-Leu-|-Tyr-Trp, in which cleavage of the -Tyr-|-Leu- and -Tyr-|-Trp bonds also occurs).. Its function is as follows. Cleaves peptides in various proteins in a process that requires ATP hydrolysis. Has a chymotrypsin-like activity. Plays a major role in the degradation of misfolded proteins. The sequence is that of ATP-dependent Clp protease proteolytic subunit from Nephroselmis olivacea (Green alga).